Consider the following 184-residue polypeptide: MISLHNLIWIDLEMTGLNPEQDRILEIATLITDANLNIIAEGPVLAIHQSEEQLKLMNTWNIRIHTANGLIEKVRKSTLNEETAAAQTIAFLQEWVPAGKSPICGNSISQDRRFLYRYMPILESYFHYRCLDVSTLQELARRWKPKIMAGIKKKNSHKALDDIRESVAELVYYRAHFLLLSSNI.

Residues 7–170 enclose the Exonuclease domain; sequence LIWIDLEMTG…DDIRESVAEL (164 aa). Tyr-128 is an active-site residue.

It belongs to the oligoribonuclease family.

Its subcellular location is the cytoplasm. Its function is as follows. 3'-to-5' exoribonuclease specific for small oligoribonucleotides. This chain is Oligoribonuclease, found in Baumannia cicadellinicola subsp. Homalodisca coagulata.